The sequence spans 295 residues: Signal-transducing adaptor protein 1 (295 aa).

Residues 25-121 enclose the PH domain; that stretch reads PLYFEGFLLI…WRGFILTVTE (97 aa). Residue Y168 is modified to Phosphotyrosine. Positions 177–280 constitute an SH2 domain; sequence ACFYTVSRKE…TDENTGQEPS (104 aa). Positions 270–295 are disordered; sequence STDENTGQEPSMEGRSEKLKKNPHIA.

Interacts with KIT and CSF1R. Interacts with URI1; the interaction is phosphorylation-dependent and occurs in a growth-dependent manner. Phosphorylated on tyrosine by TEC. Phosphorylated on tyrosine by KIT.

The protein localises to the nucleus. It is found in the cytoplasm. It localises to the mitochondrion. Functionally, in BCR signaling, appears to function as a docking protein acting downstream of TEC and participates in a positive feedback loop by increasing the activity of TEC. The sequence is that of Signal-transducing adaptor protein 1 (STAP1) from Homo sapiens (Human).